The chain runs to 285 residues: CBY1-interacting BAR domain-containing protein 1-B (285 aa).

The transit peptide at 1 to 48 (MSQTPEARTRDNQTRQIQESVNNVEKHFGELCQIFAGYVRKTARLRDK) directs the protein to the mitochondrion. The BAR-like stretch occupies residues 11-221 (DNQTRQIQES…DIDEEEDLEV (211 aa)). Positions 142 to 184 (RQIISQAETELQRATMDAARISQQLEETIDNFEKQKIKDIKKL) form a coiled coil. A compositionally biased stretch (polar residues) spans 241–261 (NSRSGSTSRAPSVISQPPGNR). The segment at 241-285 (NSRSGSTSRAPSVISQPPGNRQKNRMEDDEDGEDDNDENSTEDEN) is disordered. Residues 267 to 285 (EDDEDGEDDNDENSTEDEN) are compositionally biased toward acidic residues.

It belongs to the CIBAR family.

Its subcellular location is the cytoplasm. The protein localises to the cytoskeleton. It localises to the microtubule organizing center. The protein resides in the centrosome. It is found in the centriole. Its subcellular location is the cell projection. The protein localises to the cilium. It localises to the nucleus. The protein resides in the mitochondrion inner membrane. It is found in the flagellum. In terms of biological role, plays a critical role in regulating mitochondrial ultrastructure and function by maintaining the integrity of mitochondrial morphology, particularly the organization of cristae. Plays a crucial role in ciliogenesis. Plays a key role in the correct positioning of the annulus, a septin-based ring structure in the sperm flagellum, serving both as a physical barrier and a membrane diffusion barrier that separates the midpiece (MP) from the principal piece (PP). This chain is CBY1-interacting BAR domain-containing protein 1-B, found in Xenopus laevis (African clawed frog).